A 337-amino-acid polypeptide reads, in one-letter code: Methylthioribose-1-phosphate isomerase (337 aa).

Residues R47 to A49, R81, and Q184 each bind substrate. D225 functions as the Proton donor in the catalytic mechanism. A substrate-binding site is contributed by N235–K236.

It belongs to the eIF-2B alpha/beta/delta subunits family. MtnA subfamily.

It carries out the reaction 5-(methylsulfanyl)-alpha-D-ribose 1-phosphate = 5-(methylsulfanyl)-D-ribulose 1-phosphate. The protein operates within amino-acid biosynthesis; L-methionine biosynthesis via salvage pathway; L-methionine from S-methyl-5-thio-alpha-D-ribose 1-phosphate: step 1/6. In terms of biological role, catalyzes the interconversion of methylthioribose-1-phosphate (MTR-1-P) into methylthioribulose-1-phosphate (MTRu-1-P). This Parasynechococcus marenigrum (strain WH8102) protein is Methylthioribose-1-phosphate isomerase.